We begin with the raw amino-acid sequence, 89 residues long: Large ribosomal subunit protein bL27 (89 aa).

Residues 1–20 form a disordered region; that stretch reads MAHKKAGGSSRNGRDSAGQR.

Belongs to the bacterial ribosomal protein bL27 family.

This Paramagnetospirillum magneticum (strain ATCC 700264 / AMB-1) (Magnetospirillum magneticum) protein is Large ribosomal subunit protein bL27.